We begin with the raw amino-acid sequence, 354 residues long: DNA polymerase IV (354 aa).

Positions 8–189 (IIHVDMDCFY…LPLEKIPGVG (182 aa)) constitute a UmuC domain. 2 residues coordinate Mg(2+): D12 and D107. Residue E108 is part of the active site.

It belongs to the DNA polymerase type-Y family. In terms of assembly, monomer. Mg(2+) serves as cofactor.

It localises to the cytoplasm. The enzyme catalyses DNA(n) + a 2'-deoxyribonucleoside 5'-triphosphate = DNA(n+1) + diphosphate. In terms of biological role, poorly processive, error-prone DNA polymerase involved in untargeted mutagenesis. Copies undamaged DNA at stalled replication forks, which arise in vivo from mismatched or misaligned primer ends. These misaligned primers can be extended by PolIV. Exhibits no 3'-5' exonuclease (proofreading) activity. May be involved in translesional synthesis, in conjunction with the beta clamp from PolIII. The polypeptide is DNA polymerase IV (Vibrio parahaemolyticus serotype O3:K6 (strain RIMD 2210633)).